Consider the following 313-residue polypeptide: Ribosomal RNA small subunit methyltransferase H (313 aa).

Residues 35 to 37 (GGH), Asp-55, Phe-79, Asp-100, and Gln-107 each bind S-adenosyl-L-methionine.

It belongs to the methyltransferase superfamily. RsmH family.

Its subcellular location is the cytoplasm. The enzyme catalyses cytidine(1402) in 16S rRNA + S-adenosyl-L-methionine = N(4)-methylcytidine(1402) in 16S rRNA + S-adenosyl-L-homocysteine + H(+). Its function is as follows. Specifically methylates the N4 position of cytidine in position 1402 (C1402) of 16S rRNA. In Burkholderia pseudomallei (strain K96243), this protein is Ribosomal RNA small subunit methyltransferase H.